A 124-amino-acid chain; its full sequence is Large ribosomal subunit protein bL20c (124 aa).

Belongs to the bacterial ribosomal protein bL20 family.

It localises to the plastid. The protein resides in the chloroplast. Its function is as follows. Binds directly to 23S ribosomal RNA and is necessary for the in vitro assembly process of the 50S ribosomal subunit. It is not involved in the protein synthesizing functions of that subunit. This chain is Large ribosomal subunit protein bL20c (rpl20), found in Euglena gracilis.